The sequence spans 190 residues: Inosine triphosphate pyrophosphatase (190 aa).

Residue 9–14 participates in ITP binding; it reads TGNAKK. Residue Glu-39 coordinates Mg(2+). ITP contacts are provided by residues Lys-51, 67 to 68, Lys-84, 144 to 147, Lys-167, and 172 to 173; these read DT, FGWD, and HR.

Belongs to the HAM1 NTPase family. In terms of assembly, homodimer. Mg(2+) is required as a cofactor. It depends on Mn(2+) as a cofactor.

It is found in the cytoplasm. The catalysed reaction is ITP + H2O = IMP + diphosphate + H(+). It catalyses the reaction dITP + H2O = dIMP + diphosphate + H(+). The enzyme catalyses XTP + H2O = XMP + diphosphate + H(+). Pyrophosphatase that hydrolyzes non-canonical purine nucleotides such as inosine triphosphate (ITP), deoxyinosine triphosphate (dITP) or xanthosine 5'-triphosphate (XTP) to their respective monophosphate derivatives. The enzyme does not distinguish between the deoxy- and ribose forms. Probably excludes non-canonical purines from RNA and DNA precursor pools, thus preventing their incorporation into RNA and DNA and avoiding chromosomal lesions. This is Inosine triphosphate pyrophosphatase from Pediculus humanus subsp. corporis (Body louse).